Here is a 495-residue protein sequence, read N- to C-terminus: MEYLLSIDQGTTSSRATLYAASGETLATVSRPLVQHYPNPGWVEHAAQEIWEGQLACIAEAIAKAGIAPAKVAGIGITNQRETTVVWERETGEPLHRAIVWQDRRTAELTESLKEQGLEAMVRERTGLLLDPYFSASKLSWLLDRVDGLRRRAERGEVCFGTIDSWLMFKLSGGKSHLTDISNASRTMLFNINTLEWDEELLRLFRIPRGMLPEVRGSAAGFGHTSAQVAGAEIPIAGVAGDQQAALFGQGCFAPGMAKATFGTGAFVVMNSGARLGVGDGVLSTIAWQLPGEAVQYALEGSIFIAGAAVQWLQEGLGLIASAREVEALAASVSDSAGVYFVPALSGLGTPYWDPYARGVIAGLTRGSTKAHLARAALEAIAFQTLDAIRAMEKASGIALKELRVDGGAAADNLLLQIQADLLGVPVLRPRCTESTSLGAAFLAGIGAGVLDTSAIAAQWALDRRFEPQMERNLREELHRGWQKCVRLSLGWEKN.

Residue Thr11 participates in ADP binding. Residues Thr11, Thr12, and Ser13 each coordinate ATP. Residue Thr11 participates in sn-glycerol 3-phosphate binding. Arg15 lines the ADP pocket. Residues Arg81, Glu82, Tyr133, and Asp242 each coordinate sn-glycerol 3-phosphate. Glycerol contacts are provided by Arg81, Glu82, Tyr133, Asp242, and Gln243. Residues Thr264 and Gly307 each contribute to the ADP site. Thr264, Gly307, Gln311, and Gly408 together coordinate ATP. Gly408 serves as a coordination point for ADP.

The protein belongs to the FGGY kinase family.

It catalyses the reaction glycerol + ATP = sn-glycerol 3-phosphate + ADP + H(+). The protein operates within polyol metabolism; glycerol degradation via glycerol kinase pathway; sn-glycerol 3-phosphate from glycerol: step 1/1. Inhibited by fructose 1,6-bisphosphate (FBP). Key enzyme in the regulation of glycerol uptake and metabolism. Catalyzes the phosphorylation of glycerol to yield sn-glycerol 3-phosphate. This chain is Glycerol kinase, found in Geobacter sp. (strain M21).